Here is a 367-residue protein sequence, read N- to C-terminus: Probable thylakoidal processing peptidase 2, chloroplastic (367 aa).

Residues 1-68 (MAIRVTFTYS…NTWGPSSGPR (68 aa)) constitute a chloroplast transit peptide. Positions 53-72 (DKSPGSNTWGPSSGPRARPA) are disordered. The segment covering 62-72 (GPSSGPRARPA) has biased composition (low complexity). Residues 185–205 (EDAKAAFTAVTVSLLFRSALA) form a helical membrane-spanning segment. The Lumenal, thylakoid portion of the chain corresponds to 206–367 (EPKSIPSTSM…VSQKRAVDVS (162 aa)). Ser-214 is a catalytic residue.

Belongs to the peptidase S26 family.

It localises to the plastid. The protein resides in the chloroplast thylakoid membrane. The enzyme catalyses Cleavage of hydrophobic, N-terminal signal or leader sequences from secreted and periplasmic proteins.. Functionally, cleaves the thylakoid-transfer domain from a chloroplast protein. The polypeptide is Probable thylakoidal processing peptidase 2, chloroplastic (TPP2) (Arabidopsis thaliana (Mouse-ear cress)).